The chain runs to 57 residues: Large ribosomal subunit protein bL32B (57 aa).

This sequence belongs to the bacterial ribosomal protein bL32 family.

The polypeptide is Large ribosomal subunit protein bL32B (Listeria welshimeri serovar 6b (strain ATCC 35897 / DSM 20650 / CCUG 15529 / CIP 8149 / NCTC 11857 / SLCC 5334 / V8)).